The following is a 297-amino-acid chain: MSDTDRRILFVHAHPDDESISTGATMAKYAAEGAHVCLVTCTLGEEGEIIPEELRHLASDKEDRLGEFRIGELKEACAALGVTDHRFLGGAGRWRDSGMMGAPSNDHPRCFWRADVEEAARLLAEIIREVRPQVIVTYDEHGHYGHPDHIQAHRVTVRARELAADPAHGEGEPWSAAKLYATATPRTVLARSIALMRDSRHPFERVSSIDQLGYGVPDDQVTTVVDARAHLPAKLAALRAHRTQVVVASEGPFFALSNNIGQQAFGAEYYTLLDGPRGPAVADGRESGLFSGLPGLE.

H14, D17, and H149 together coordinate Zn(2+).

The protein belongs to the MshB deacetylase family. It depends on Zn(2+) as a cofactor.

The catalysed reaction is 1D-myo-inositol 2-acetamido-2-deoxy-alpha-D-glucopyranoside + H2O = 1D-myo-inositol 2-amino-2-deoxy-alpha-D-glucopyranoside + acetate. In terms of biological role, catalyzes the deacetylation of 1D-myo-inositol 2-acetamido-2-deoxy-alpha-D-glucopyranoside (GlcNAc-Ins) in the mycothiol biosynthesis pathway. In Thermomonospora curvata (strain ATCC 19995 / DSM 43183 / JCM 3096 / KCTC 9072 / NBRC 15933 / NCIMB 10081 / Henssen B9), this protein is 1D-myo-inositol 2-acetamido-2-deoxy-alpha-D-glucopyranoside deacetylase.